The sequence spans 365 residues: UPF0718 protein MJ0584 (365 aa).

11 helical membrane-spanning segments follow: residues 6–26 (MSFI…YLNV), 32–52 (LLMA…NFII), 67–87 (VAAV…PLFA), 108–128 (AINV…IGFL), 130–150 (AVFA…IFKS), 174–194 (ITFF…PKLF), 201–221 (LYDG…ILAV), 245–265 (IVFP…AIIP), 282–302 (FIAS…VPII), 308–328 (LGMG…LSIP), and 344–364 (TYLG…GIIL).

The protein belongs to the UPF0718 family.

Its subcellular location is the cell membrane. The polypeptide is UPF0718 protein MJ0584 (Methanocaldococcus jannaschii (strain ATCC 43067 / DSM 2661 / JAL-1 / JCM 10045 / NBRC 100440) (Methanococcus jannaschii)).